Here is a 96-residue protein sequence, read N- to C-terminus: Co-chaperonin GroES (96 aa).

This sequence belongs to the GroES chaperonin family. In terms of assembly, heptamer of 7 subunits arranged in a ring. Interacts with the chaperonin GroEL.

Its subcellular location is the cytoplasm. Its function is as follows. Together with the chaperonin GroEL, plays an essential role in assisting protein folding. The GroEL-GroES system forms a nano-cage that allows encapsulation of the non-native substrate proteins and provides a physical environment optimized to promote and accelerate protein folding. GroES binds to the apical surface of the GroEL ring, thereby capping the opening of the GroEL channel. This chain is Co-chaperonin GroES, found in Streptococcus pyogenes serotype M18 (strain MGAS8232).